Consider the following 545-residue polypeptide: CTP synthase (545 aa).

Residues 1–266 are amidoligase domain; the sequence is MTTRYIFVTG…DELVVKRFGI (266 aa). Residue serine 14 participates in CTP binding. Serine 14 is a UTP binding site. Residues 15–20 and aspartate 72 each bind ATP; that span reads SLGKGI. Residues aspartate 72 and glutamate 140 each coordinate Mg(2+). CTP is bound by residues 147 to 149, 187 to 192, and lysine 223; these read DIE and KTKPTQ. UTP contacts are provided by residues 187–192 and lysine 223; that span reads KTKPTQ. 239–241 lines the ATP pocket; sequence KDV. In terms of domain architecture, Glutamine amidotransferase type-1 spans 291-542; sequence TIGMVGKYIE…VAAATAYQKR (252 aa). Glycine 352 serves as a coordination point for L-glutamine. Catalysis depends on cysteine 379, which acts as the Nucleophile; for glutamine hydrolysis. L-glutamine contacts are provided by residues 380–383, glutamate 403, and arginine 470; that span reads LGLQ. Residues histidine 515 and glutamate 517 contribute to the active site.

The protein belongs to the CTP synthase family. As to quaternary structure, homotetramer.

The enzyme catalyses UTP + L-glutamine + ATP + H2O = CTP + L-glutamate + ADP + phosphate + 2 H(+). It carries out the reaction L-glutamine + H2O = L-glutamate + NH4(+). The catalysed reaction is UTP + NH4(+) + ATP = CTP + ADP + phosphate + 2 H(+). It functions in the pathway pyrimidine metabolism; CTP biosynthesis via de novo pathway; CTP from UDP: step 2/2. Allosterically activated by GTP, when glutamine is the substrate; GTP has no effect on the reaction when ammonia is the substrate. The allosteric effector GTP functions by stabilizing the protein conformation that binds the tetrahedral intermediate(s) formed during glutamine hydrolysis. Inhibited by the product CTP, via allosteric rather than competitive inhibition. In terms of biological role, catalyzes the ATP-dependent amination of UTP to CTP with either L-glutamine or ammonia as the source of nitrogen. Regulates intracellular CTP levels through interactions with the four ribonucleotide triphosphates. This is CTP synthase from Shewanella sediminis (strain HAW-EB3).